A 205-amino-acid chain; its full sequence is Thymidylate kinase (205 aa).

Residue 7-14 (GIDGSGKT) coordinates ATP.

Belongs to the thymidylate kinase family.

The catalysed reaction is dTMP + ATP = dTDP + ADP. In terms of biological role, phosphorylation of dTMP to form dTDP in both de novo and salvage pathways of dTTP synthesis. This chain is Thymidylate kinase, found in Wolbachia pipientis subsp. Culex pipiens (strain wPip).